The following is a 367-amino-acid chain: Inhibin alpha chain (367 aa).

The signal sequence occupies residues 1–20; sequence MVPPLPLLLLLLLVPQGGHG. A propeptide spanning residues 21-63 is cleaved from the precursor; sequence CQGSELDREIVLAKVRALFLDALGPPAVTGEGGDPGVRRLPRR. Residues 64-233 constitute a propeptide, inhibin alpha N-terminal region; the sequence is HALGGFARRG…PPSGGERTRR (170 aa). 2 N-linked (GlcNAc...) asparagine glycosylation sites follow: Asn147 and Asn269. 3 disulfide bridges follow: Cys263-Cys329, Cys292-Cys364, and Cys296-Cys366.

Belongs to the TGF-beta family. Dimeric, linked by one or more disulfide bonds. Activin B is a dimer of alpha and beta-B. Inhibin A is a dimer of alpha and beta-A. Inhibin B is a dimer of alpha and beta-B. Interacts with TGFBR3L; this interaction regulates female fertility. In terms of processing, proteolytic processing yields a number of bioactive forms, consisting either solely of the mature alpha chain, of the most N-terminal propeptide linked through a disulfide bond to the mature alpha chain, or of the entire proprotein.

It is found in the secreted. Its function is as follows. Inhibins and activins inhibit and activate, respectively, the secretion of follitropin by the pituitary gland. Inhibins/activins are involved in regulating a number of diverse functions such as hypothalamic and pituitary hormone secretion, gonadal hormone secretion, germ cell development and maturation, erythroid differentiation, insulin secretion, nerve cell survival, embryonic axial development or bone growth, depending on their subunit composition. Inhibins appear to oppose the functions of activins. Inhibin A is a dimer of alpha/INHA and beta-A/INHBA that functions as a feedback regulator in the hypothalamic-pituitary-gonadal (HPG) axis. Inhibits the secretion of FSH from the anterior pituitary gland by acting on pituitary gonadotrope cells. Antagonizes activin A by binding to the proteoglycan, betaglycan, and forming a stable complex with and, thereby, sequestering type II activin receptors while excluding type I receptor. In terms of biological role, inhibin B is a dimer of alpha and beta-B that plays a crucial role in the regulation of the reproductive system by inhibiting the secretion of follicle-stimulating hormone (FSH) from the anterior pituitary gland. Thereby, maintains reproductive homeostasis in both males and females. Acts as a more potent suppressor of FSH release than inhibin A. Functions as competitive receptor antagonist binding activin type II receptors with high affinity in the presence of the TGF-beta type III coreceptor/TGFBR3L. This is Inhibin alpha chain (INHA) from Equus caballus (Horse).